The following is a 190-amino-acid chain: Elongation factor P-like protein (190 aa).

This sequence belongs to the elongation factor P family.

The protein is Elongation factor P-like protein of Erwinia tasmaniensis (strain DSM 17950 / CFBP 7177 / CIP 109463 / NCPPB 4357 / Et1/99).